Here is a 276-residue protein sequence, read N- to C-terminus: Large ribosomal subunit protein uL2 (276 aa).

The tract at residues 219–268 is disordered; sequence TVRGSVMNPNDHPHGGGEGRQPVGRKSPMTPWGKPALGLKTRNKKAKSSK.

Belongs to the universal ribosomal protein uL2 family. As to quaternary structure, part of the 50S ribosomal subunit. Forms a bridge to the 30S subunit in the 70S ribosome.

Functionally, one of the primary rRNA binding proteins. Required for association of the 30S and 50S subunits to form the 70S ribosome, for tRNA binding and peptide bond formation. It has been suggested to have peptidyltransferase activity; this is somewhat controversial. Makes several contacts with the 16S rRNA in the 70S ribosome. The polypeptide is Large ribosomal subunit protein uL2 (Lactococcus lactis subsp. lactis (strain IL1403) (Streptococcus lactis)).